A 1960-amino-acid polypeptide reads, in one-letter code: Myosin-9 (1960 aa).

Residue Ala-2 is modified to N-acetylalanine. The segment at 2–838 is mediates interaction with LIMCH1; it reads AQQAADKYLY…RLFTKVKPLL (837 aa). At Lys-8 the chain carries N6-acetyllysine. Tyr-11 carries the post-translational modification Phosphotyrosine. Positions 27-77 constitute a Myosin N-terminal SH3-like domain; sequence AAKKLVWVPSSKNGFEPASLKEEVGEEAIVELVENGKKVKVNKDDIQKMNP. In terms of domain architecture, Myosin motor spans 81 to 776; that stretch reads SKVEDMAELT…VLAHLEEERD (696 aa). Lys-102 carries the N6-acetyllysine modification. 174–181 is a binding site for ATP; sequence GESGAGKT. Lys-299, Lys-435, and Lys-613 each carry N6-acetyllysine. Ser-628 is modified (phosphoserine). The segment at 654-676 is actin-binding; the sequence is LAKLMATLRNTNPNFVRCIIPNH. Tyr-754 is modified (phosphotyrosine). Positions 779–808 constitute an IQ domain; sequence ITDVIIGFQACCRGYLARKAFAKRQQQLTA. The stretch at 841-1926 forms a coiled coil; the sequence is IRHEDELLAK…LKNKLRRGDL (1086 aa). Lys-850 is subject to N6-succinyllysine. An N6-acetyllysine mark is found at Lys-860, Lys-975, and Lys-1024. The span at 1035-1055 shows a compositional bias: basic and acidic residues; sequence RLRREEKQRQELEKTRRKLEG. Residues 1035–1057 form a disordered region; that stretch reads RLRREEKQRQELEKTRRKLEGDS. The residue at position 1114 (Ser-1114) is a Phosphoserine. The interval 1117–1167 is disordered; it reads QEDLESERASRNKAEKQKRDLGEELEALKTELEDTLDSTAAQQELRSKREQ. Residues 1122 to 1148 show a composition bias toward basic and acidic residues; it reads SERASRNKAEKQKRDLGEELEALKTEL. N6-acetyllysine occurs at positions 1234 and 1249. The disordered stretch occupies residues 1327–1352; it reads LSTKLKQMEDEKNSFREQLEEEEEAK. Residues 1332 to 1352 show a composition bias toward basic and acidic residues; it reads KQMEDEKNSFREQLEEEEEAK. Lys-1357, Lys-1392, Lys-1404, Lys-1410, Lys-1459, and Lys-1638 each carry N6-acetyllysine. Lys-1669 is subject to N6-succinyllysine. Ser-1714 is subject to Phosphoserine. Residues 1768 to 1788 form a disordered region; the sequence is LERSHAQKNENARQQLERQNK. An N6-acetyllysine mark is found at Lys-1793, Lys-1802, and Lys-1845. Residues 1877-1908 form a disordered region; that stretch reads RQLEEAEEEAQRANASRRKLQRELEDATETAD. An Omega-N-methylarginine modification is found at Arg-1923. Position 1939 is a phosphothreonine (Thr-1939). Residues 1939–1960 form a disordered region; the sequence is TGDCSDEEVDGKADGADAKAAE. Ser-1943 bears the Phosphoserine mark. The span at 1948 to 1960 shows a compositional bias: basic and acidic residues; that stretch reads DGKADGADAKAAE.

It belongs to the TRAFAC class myosin-kinesin ATPase superfamily. Myosin family. As to quaternary structure, myosin is a hexameric protein that consists of 2 heavy chain subunits (MHC), 2 alkali light chain subunits (MLC) and 2 regulatory light chain subunits (MLC-2). Interacts with RASIP1. Interacts with DDR1. Interacts with PDLIM2. Interacts with SVIL. Interacts with HTRA3. Interacts with Myo7a. Interacts with CFAP95. Interacts with LIMCH1; independently of the integration of MYH9 into the myosin complex. Interacts with RAB3A. Interacts with ZBED4. Interacts with S100A4; this interaction increases cell motility. ISGylated. Post-translationally, ubiquitination.

Its subcellular location is the cytoplasm. It localises to the cytoskeleton. It is found in the cell cortex. The protein resides in the cytoplasmic vesicle. The protein localises to the secretory vesicle. Its subcellular location is the cortical granule. Functionally, cellular myosin that appears to play a role in cytokinesis, cell shape, and specialized functions such as secretion and capping. Required for cortical actin clearance prior to oocyte exocytosis. Promotes cell motility in conjunction with S100A4. During cell spreading, plays an important role in cytoskeleton reorganization, focal contact formation (in the margins but not the central part of spreading cells), and lamellipodial retraction; this function is mechanically antagonized by MYH10. This Mus musculus (Mouse) protein is Myosin-9 (Myh9).